The chain runs to 333 residues: Biotin synthase (333 aa).

In terms of domain architecture, Radical SAM core spans 54-283 (FCSNTFDMCS…RAFIRLAGGR (230 aa)). Residues Cys-72, Cys-76, and Cys-79 each contribute to the [4Fe-4S] cluster site. [2Fe-2S] cluster is bound by residues Ser-116, Cys-148, Cys-208, and Arg-278.

Belongs to the radical SAM superfamily. Biotin synthase family. In terms of assembly, homodimer. Requires [4Fe-4S] cluster as cofactor. [2Fe-2S] cluster is required as a cofactor.

It catalyses the reaction (4R,5S)-dethiobiotin + (sulfur carrier)-SH + 2 reduced [2Fe-2S]-[ferredoxin] + 2 S-adenosyl-L-methionine = (sulfur carrier)-H + biotin + 2 5'-deoxyadenosine + 2 L-methionine + 2 oxidized [2Fe-2S]-[ferredoxin]. Its pathway is cofactor biosynthesis; biotin biosynthesis; biotin from 7,8-diaminononanoate: step 2/2. Its function is as follows. Catalyzes the conversion of dethiobiotin (DTB) to biotin by the insertion of a sulfur atom into dethiobiotin via a radical-based mechanism. This chain is Biotin synthase, found in Brachyspira hyodysenteriae (strain ATCC 49526 / WA1).